The chain runs to 208 residues: FMN-dependent NADH:quinone oxidoreductase 2 (208 aa).

17-19 contributes to the FMN binding site; sequence SVS.

Belongs to the azoreductase type 1 family. Homodimer. The cofactor is FMN.

The enzyme catalyses 2 a quinone + NADH + H(+) = 2 a 1,4-benzosemiquinone + NAD(+). It catalyses the reaction N,N-dimethyl-1,4-phenylenediamine + anthranilate + 2 NAD(+) = 2-(4-dimethylaminophenyl)diazenylbenzoate + 2 NADH + 2 H(+). Its function is as follows. Quinone reductase that provides resistance to thiol-specific stress caused by electrophilic quinones. In terms of biological role, also exhibits azoreductase activity. Catalyzes the reductive cleavage of the azo bond in aromatic azo compounds to the corresponding amines. The chain is FMN-dependent NADH:quinone oxidoreductase 2 from Halalkalibacterium halodurans (strain ATCC BAA-125 / DSM 18197 / FERM 7344 / JCM 9153 / C-125) (Bacillus halodurans).